The primary structure comprises 182 residues: Gamma-crystallin N (182 aa).

3 consecutive Beta/gamma crystallin 'Greek key' domains span residues 6–46 (GKIT…HVES), 47–89 (GAWV…RPVG), and 95–136 (FRLE…KVYG). Positions 153–182 (LSSSLQSDQGPEEATTKPATTQPPFLTANL) are disordered. A compositionally biased stretch (polar residues) spans 169 to 182 (KPATTQPPFLTANL).

The protein belongs to the beta/gamma-crystallin family. As to quaternary structure, monomer. Not specifically expressed in eye.

This Homo sapiens (Human) protein is Gamma-crystallin N.